We begin with the raw amino-acid sequence, 371 residues long: Ferredoxin--NADP reductase, apicoplast (371 aa).

An apicoplast-targeting transit peptide spans 1–18 (MKIRFVFILSVLISGVCC). FAD contacts are provided by residues lysine 68, 155 to 159 (ARLYS), 172 to 179 (AIKIHKYE), 192 to 194 (YCS), and threonine 235. The region spanning 68–218 (KNPLKCKIVD…TGAHGYFNLP (151 aa)) is the FAD-binding FR-type domain. Residue lysine 174 participates in NADP(+) binding. NADP(+) contacts are provided by residues 272-273 (VY), serine 302, 313-315 (YVQ), and 341-343 (HKS). FAD-binding residues include lysine 342 and tyrosine 371.

This sequence belongs to the ferredoxin--NADP reductase type 1 family. Monomer. Homodimer; disulfide linked. NADP binding accelerates formation of an inactive, disulfide-linked homodimer when the protein is exposed to air for 24 hours or more (in vitro); the physiological relevance of this is uncertain. FAD is required as a cofactor.

It localises to the plastid. The protein localises to the apicoplast. It catalyses the reaction 2 reduced [2Fe-2S]-[ferredoxin] + NADP(+) + H(+) = 2 oxidized [2Fe-2S]-[ferredoxin] + NADPH. Functionally, may play a role in the terminal step of the DOXP/MEP pathway for isoprenoid precursor biosynthesis. In Plasmodium falciparum (isolate 3D7), this protein is Ferredoxin--NADP reductase, apicoplast.